The sequence spans 138 residues: Large ribosomal subunit protein uL16 (138 aa).

It belongs to the universal ribosomal protein uL16 family. As to quaternary structure, part of the 50S ribosomal subunit.

Functionally, binds 23S rRNA and is also seen to make contacts with the A and possibly P site tRNAs. In Gluconacetobacter diazotrophicus (strain ATCC 49037 / DSM 5601 / CCUG 37298 / CIP 103539 / LMG 7603 / PAl5), this protein is Large ribosomal subunit protein uL16.